Here is a 782-residue protein sequence, read N- to C-terminus: General transcription and DNA repair factor IIH helicase/translocase subunit XPB (782 aa).

Positions 1 to 11 (MGKRDRADRDK) are enriched in basic and acidic residues. 2 disordered regions span residues 1 to 51 (MGKR…ESGT) and 218 to 241 (SAIS…PQGK). A Nuclear localization signal motif is present at residues 6 to 18 (RADRDKKKSRKRH). Positions 21 to 30 (DEEDDEEDAP) are enriched in acidic residues. The segment covering 218–236 (SAISKTAESSGGPSTSRVT) has biased composition (polar residues). Residues 327–488 (MFGNGRARSG…DLNFLIGPKL (162 aa)) enclose the Helicase ATP-binding domain. 340–347 (LPCGAGKS) lines the ATP pocket. Residues 441 to 444 (DEVH) carry the DEVH box motif. The 161-residue stretch at 542–702 (RACQFLIKFH…LAGMEEEDLA (161 aa)) folds into the Helicase C-terminal domain. Residues Arg642 and Arg645 each coordinate ATP. Ser686 carries the phosphoserine modification. Residue Ser751 is modified to Phosphoserine; by CK2.

It belongs to the helicase family. RAD25/XPB subfamily. As to quaternary structure, component of the 7-subunit TFIIH core complex composed of XPB/ERCC3, XPD/ERCC2, GTF2H1, GTF2H2, GTF2H3, GTF2H4 and GTF2H5, which is active in NER. The core complex associates with the 3-subunit CDK-activating kinase (CAK) module composed of CCNH/cyclin H, CDK7 and MNAT1 to form the 10-subunit holoenzyme (holo-TFIIH) active in transcription. Interacts with PUF60. Interacts with ATF7IP. Interacts with KAT2A; leading to KAT2A recruitment to promoters and acetylation of histones. Part of TBP-based Pol II pre-initiation complex (PIC), in which Pol II core assembles with general transcription factors and other specific initiation factors including GTF2E1, GTF2E2, GTF2F1, GTF2F2, TCEA1, ERCC2, ERCC3, GTF2H2, GTF2H3, GTF2H4, GTF2H5, GTF2A1, GTF2A2, GTF2B and TBP; this large multi-subunit PIC complex mediates DNA unwinding and targets Pol II core to the transcription start site where the first phosphodiester bond forms. In terms of assembly, (Microbial infection) Interacts with Epstein-Barr virus EBNA2. In terms of processing, phosphorylation on Ser-751 by CK2 controls the 5'-excision activity of ERCC1-XPF endonuclease; phosphorylated protein inhibits the excision activity and thus NER. Dephosphorylation reactivates the 5'-excision step. Phosphorylation has no effect on transcription or the 3'-5' helicase activity.

The protein resides in the nucleus. The enzyme catalyses Couples ATP hydrolysis with the unwinding of duplex DNA by translocating in the 3'-5' direction.. It carries out the reaction ATP + H2O = ADP + phosphate + H(+). With respect to regulation, phosphorylation on Ser-751 by CK2 controls the 5'-excision activity of ERCC1-XPF endonuclease; phosphorylated protein inhibits the excision activity and thus NER. ATPase activity is stimulated by TFIIH subunit p52 (GTF2H4). DNA translocase activity by this subunit in TFIIH is stimulated by XPA, ERCC5/XPG and XFP plus ERCC1; translocase activity is sensitive to triptolide which targets this enzyme. ATP-dependent 3'-5' DNA helicase/translocase. Binds dsDNA rather than ssDNA, unzipping it in a translocase rather than classical helicase activity. Component of the general transcription and DNA repair factor IIH (TFIIH) core complex. When complexed to CDK-activating kinase (CAK), involved in RNA transcription by RNA polymerase II. The ATPase activity of XPB/ERCC3, but not its helicase activity, is required for DNA opening; it may wrap around the damaged DNA wedging it open, causing localized melting that allows XPD/ERCC2 helicase to anchor. In transcription, TFIIH has an essential role in transcription initiation. When the pre-initiation complex (PIC) has been established, TFIIH is required for promoter opening and promoter escape. The ATP-dependent helicase activity of XPB/ERCC3 is required for promoter opening and promoter escape. In transcription pre-initiation complexes induces and propagates a DNA twist to open DNA. Also involved in transcription-coupled nucleotide excision repair (NER) of damaged DNA. In NER, TFIIH acts by opening DNA around the lesion to allow the excision of the damaged oligonucleotide and its replacement by a new DNA fragment. The structure of the TFIIH transcription complex differs from the NER-TFIIH complex; large movements by XPD/ERCC2 and XPB/ERCC3 are stabilized by XPA. XPA retains XPB/ERCC3 at the 5' end of a DNA bubble (mimicking DNA damage). This chain is General transcription and DNA repair factor IIH helicase/translocase subunit XPB, found in Homo sapiens (Human).